Consider the following 460-residue polypeptide: uncharacterized protein (460 aa).

The 59-residue stretch at 6–64 (PVKKNSTYNLYITGMGTKGEGIGKINNFTIFVTGAILGEEVEVNIIKVNKNYAVGKLLN) folds into the TRAM domain. 4 residues coordinate [4Fe-4S] cluster: Cys77, Cys83, Cys86, and Cys163. S-adenosyl-L-methionine is bound by residues Gln287, Tyr316, Glu337, and Asp385. Residue Cys412 is the Nucleophile of the active site.

It belongs to the class I-like SAM-binding methyltransferase superfamily. RNA M5U methyltransferase family.

This is an uncharacterized protein from Clostridium tetani (strain Massachusetts / E88).